Here is a 1221-residue protein sequence, read N- to C-terminus: Adhesion G-protein coupled receptor G6 (1221 aa).

The first 37 residues, 1–37, serve as a signal peptide directing secretion; the sequence is MMFRSDRMWSCHWKWKPSPLLFLFALYIMCVPHSVWG. The Extracellular segment spans residues 38 to 862; the sequence is CANCRVVLSN…ASQLDARNTK (825 aa). A disulfide bond links cysteine 41 and cysteine 67. Positions 41–149 constitute a CUB domain; the sequence is CRVVLSNPSG…KGFNASYIRV (109 aa). 2 residues coordinate Ca(2+): glutamate 89 and aspartate 97. An intrachain disulfide couples cysteine 94 to cysteine 111. A glycan (N-linked (GlcNAc...) asparagine) is linked at asparagine 121. Positions 134, 136, and 137 each coordinate Ca(2+). N-linked (GlcNAc...) asparagine glycans are attached at residues asparagine 143, asparagine 206, asparagine 258, asparagine 314, asparagine 324, asparagine 353, asparagine 438, asparagine 445, asparagine 452, asparagine 485, asparagine 488, and asparagine 505. In terms of domain architecture, Pentraxin (PTX) spans 154 to 356; sequence RNQKVILPQT…ALKAESNLSC (203 aa). Intrachain disulfides connect cysteine 186/cysteine 254 and cysteine 231/cysteine 277. Positions 473–837 are mediates interaction with laminin-2; the sequence is EPRLVLWALL…SDASETVCLC (365 aa). Cystine bridges form between cysteine 525–cysteine 560 and cysteine 548–cysteine 580. 12 N-linked (GlcNAc...) asparagine glycosylation sites follow: asparagine 563, asparagine 593, asparagine 600, asparagine 605, asparagine 667, asparagine 673, asparagine 695, asparagine 704, asparagine 750, asparagine 776, asparagine 811, and asparagine 818. The region spanning 670–853 is the GAIN-B domain; the sequence is SHVNITTRNL…GVLMDLPRSA (184 aa). 2 disulfide bridges follow: cysteine 803–cysteine 835 and cysteine 822–cysteine 837. A GPS region spans residues 803–853; sequence CAFWDLNKNKSFGGWNTSGCVAHRDSDASETVCLCNHFTHFGVLMDLPRSA. Positions 842–850 are stachel; sequence HFGVLMDLP. The helical transmembrane segment at 863–883 threads the bilayer; it reads VLTFISYIGCGISAIFSAATL. At 884-903 the chain is on the cytoplasmic side; sequence LTYVAFEKLRRDYPSKILMN. The helical transmembrane segment at 904–924 threads the bilayer; it reads LSTALLFLNLLFLLDGWITSF. Residues 925–929 lie on the Extracellular side of the membrane; it reads NVDGL. The helical transmembrane segment at 930–950 threads the bilayer; it reads CIAVAVLLHFFLLATFTWMGL. Residues 951-970 are Cytoplasmic-facing; sequence EAIHMYIALVKVFNTYIRRY. The helical transmembrane segment at 971 to 991 threads the bilayer; that stretch reads ILKFCIIGWGLPALVVSVVLA. Over 992–1024 the chain is Extracellular; the sequence is SRNNNEVYGKESYGKEKGDEFCWIQDPVIFYVT. A helical membrane pass occupies residues 1025 to 1045; the sequence is CAGYFGVMFFLNIAMFIVVMV. Over 1046–1069 the chain is Cytoplasmic; it reads QICGRNGKRSNRTLREEVLRNLRS. Residues 1070 to 1090 form a helical membrane-spanning segment; it reads VVSLTFLLGMTWGFAFFAWGP. At 1091-1092 the chain is on the extracellular side; the sequence is LN. The chain crosses the membrane as a helical span at residues 1093 to 1113; it reads IPFMYLFSIFNSLQGLFIFIF. Position 1103 (asparagine 1103) interacts with 17alpha-hydroxyprogesterone. Topologically, residues 1114 to 1221 are cytoplasmic; sequence HCAMKENVQK…GQVLVKTGPC (108 aa). Residues 1156–1176 form a disordered region; the sequence is NLGKSLSSSSIGSNSTYLTSK. Residues serine 1165 and serine 1168 each carry the phosphoserine modification.

This sequence belongs to the G-protein coupled receptor 2 family. Adhesion G-protein coupled receptor (ADGR) subfamily. As to quaternary structure, heterodimer of 2 chains generated by proteolytic processing; the large extracellular N-terminal fragment and the membrane-bound C-terminal fragment predominantly remain associated and non-covalently linked. Interacts with Laminin-2; this interaction stabilizes the receptor in an inactive state. Laminin-2 polymerization could facilitate ADGRG6-NTF removal, thereby exposing the tethered agonist to drive myelination. Interacts with PRNP. Interacts with ITGB1. Interacts with LRP1. Proteolytically cleaved into 2 conserved sites: one in the GPS region of the GAIN-B domain (S1 site) and the other in the middle of the extracellular domain (S2 site). The proteolytic cleavage at S1 site generates an extracellular subunit and a seven-transmembrane subunit. Furin is involved in the cleavage of the S2 site generating a soluble fragment. Processing at the GPS region occurred independent of and probably prior to the cleavage at the S2 site. Proteolytic cleavage is required for activation of the receptor. Post-translationally, highly glycosylated. Expressed in placenta and to a lower extent in pancreas and liver. Detected in aortic endothelial cells but not in skin microvascular endothelial cells.

The protein localises to the cell membrane. With respect to regulation, forms a heterodimer of 2 chains generated by proteolytic processing that remain associated through non-covalent interactions mediated by the GAIN-B domain. In the inactivated receptor, the Stachel sequence (also named stalk) is embedded in the GAIN-B domain, where it adopts a beta-strand conformation. On activation, the Stachel moves into the 7 transmembrane region and adopts a twisted hook-shaped configuration that forms contacts within the receptor, leading to coupling of a G-alpha protein, which activates signaling. The cleaved GAIN-B and N-terminal domains can then dissociate from the rest of the receptor. In terms of biological role, adhesion G-protein coupled receptor (aGPCR) for steroid hormones, such as progesterone and 17alpha-hydroxyprogesterone (17OHP). Involved in many biological processes, such as myelination, sprouting angiogenesis, placenta, ear and cartilage development. Ligand binding causes a conformation change that triggers signaling via guanine nucleotide-binding proteins (G proteins) and modulates the activity of downstream effectors, such as adenylate cyclase. ADGRG6 is coupled to G(i) G alpha proteins and mediates inhibition of adenylate cyclase. Also able to couple to G(q) G proteins. Involved in myelination of the peripheral nervous system: required for differentiation of promyelinating Schwann cells and for normal myelination of axons. Also acts as a regulator of body length and bone mass. Acts as a regulator of blood-brain barrier formation in the central nervous system vie its association with LRP1 and ITGB1. The polypeptide is Adhesion G-protein coupled receptor G6 (Homo sapiens (Human)).